A 346-amino-acid polypeptide reads, in one-letter code: NADH-ubiquinone oxidoreductase chain 2 (346 aa).

11 helical membrane passes run 1-21 (MNPHATPVLVLSLALGTTITI), 25-45 (HWVLAWTGLEINTLAIIPLIS), 60-80 (FLTQAAASALVLFSSMTNAWA), 95-115 (CLLLTAAIAIKLGLVPFHFWF), 124-144 (LMTALLLSTLMKFPPLTLLLM), 149-169 (LNPALLTTMALASAALGGWMG), 178-195 (ILAFSSISHLGWIAIILV), 200-219 (LALLTFYLYTIMTSAVFMAL), 242-262 (ATLMLVLLSLAGLPPLTGFMP), 274-294 (EMTPAAMAIAMLSLLSLFFYL), and 326-346 (AILASLSILLLPLSPMIHAIV).

This sequence belongs to the complex I subunit 2 family.

It is found in the mitochondrion inner membrane. It catalyses the reaction a ubiquinone + NADH + 5 H(+)(in) = a ubiquinol + NAD(+) + 4 H(+)(out). Functionally, core subunit of the mitochondrial membrane respiratory chain NADH dehydrogenase (Complex I) that is believed to belong to the minimal assembly required for catalysis. Complex I functions in the transfer of electrons from NADH to the respiratory chain. The immediate electron acceptor for the enzyme is believed to be ubiquinone. This chain is NADH-ubiquinone oxidoreductase chain 2 (MT-ND2), found in Sibirionetta formosa (Baikal teal).